A 191-amino-acid chain; its full sequence is Fe/S biogenesis protein NfuA (191 aa).

Residues Cys149 and Cys152 each contribute to the [4Fe-4S] cluster site.

This sequence belongs to the NfuA family. In terms of assembly, homodimer. The cofactor is [4Fe-4S] cluster.

Its function is as follows. Involved in iron-sulfur cluster biogenesis. Binds a 4Fe-4S cluster, can transfer this cluster to apoproteins, and thereby intervenes in the maturation of Fe/S proteins. Could also act as a scaffold/chaperone for damaged Fe/S proteins. This Cronobacter sakazakii (strain ATCC BAA-894) (Enterobacter sakazakii) protein is Fe/S biogenesis protein NfuA.